An 82-amino-acid chain; its full sequence is RNA-binding protein Hfq (82 aa).

The region spanning 10–70 (DLFLNTVRKS…ISTIMPSQPV (61 aa)) is the Sm domain.

The protein belongs to the Hfq family. In terms of assembly, homohexamer.

In terms of biological role, RNA chaperone that binds small regulatory RNA (sRNAs) and mRNAs to facilitate mRNA translational regulation in response to envelope stress, environmental stress and changes in metabolite concentrations. Also binds with high specificity to tRNAs. The sequence is that of RNA-binding protein Hfq from Chelativorans sp. (strain BNC1).